A 184-amino-acid polypeptide reads, in one-letter code: MEKSTRTLFITIVITSMLLGFGNSDLAQDREECTNQLIELSTCIPYVGGDAKAPTKDCCAGFGQVIRKSEKCVCILVRDKDDPQLGIKINATLAAHLPSACHITAPNITDCISILHLPRNSTLAKEFENLGRIEDNYNSTSPTQIHKDGTGGGKAEPVKSNGWKEKSWLGVELLIYLLVSLIFF.

The signal sequence occupies residues 1-24 (MEKSTRTLFITIVITSMLLGFGNS). 4 cysteine pairs are disulfide-bonded: Cys33-Cys74, Cys43-Cys58, Cys59-Cys101, and Cys72-Cys111. Positions 138-158 (NSTSPTQIHKDGTGGGKAEPV) are disordered. The GPI-anchor amidated serine moiety is linked to residue Ser160. The propeptide at 161–184 (NGWKEKSWLGVELLIYLLVSLIFF) is removed in mature form.

Belongs to the plant LTP family. In terms of tissue distribution, preferentially expressed in the shoot apical meristem and the root meristem. Also present in the ovules and developing embryos. Observed in cotyledons, hypocotyls, flowers, leaves and siliques. Up-regulated in the epidermis of stems.

Its subcellular location is the cell membrane. Functionally, lipid transfer protein involved in seed and ovule maturation and development, probably by regulating the fatty acids homeostasis during suberin and sporopollenin biosynthesis or deposition. Contributes to pre-invasive defense against some non-host powdery mildew pathogens by preventing the penetration of the epidermal cell wall by the fungal agents (e.g. Blumeria graminis f. sp. hordei (Bgh)). The protein is Non-specific lipid transfer protein GPI-anchored 6 of Arabidopsis thaliana (Mouse-ear cress).